Here is a 119-residue protein sequence, read N- to C-terminus: Beta-2-microglobulin (119 aa).

An N-terminal signal peptide occupies residues 1–20; the sequence is MSPSVALAVLALLSLSGLEA. The Ig-like C1-type domain occupies 25–114; it reads PKIQVYSRHP…VTLSGPRTVK (90 aa). An intrachain disulfide couples C45 to C100.

This sequence belongs to the beta-2-microglobulin family. Heterodimer of an alpha chain and a beta chain. Beta-2-microglobulin is the beta-chain of major histocompatibility complex class I molecules.

It localises to the secreted. In terms of biological role, component of the class I major histocompatibility complex (MHC). Involved in the presentation of peptide antigens to the immune system. The polypeptide is Beta-2-microglobulin (B2M) (Macaca fascicularis (Crab-eating macaque)).